The chain runs to 195 residues: Probable GTP-binding protein EngB (195 aa).

Positions 24–195 constitute an EngB-type G domain; that stretch reads DWPEIALAGR…EAWEAILRYL (172 aa). GTP contacts are provided by residues 32 to 39, 59 to 63, 77 to 80, 144 to 147, and 176 to 178; these read GRSNVGKS, GKTQL, DVPG, TKAD, and FSS. Positions 39 and 61 each coordinate Mg(2+).

Belongs to the TRAFAC class TrmE-Era-EngA-EngB-Septin-like GTPase superfamily. EngB GTPase family. Requires Mg(2+) as cofactor.

Necessary for normal cell division and for the maintenance of normal septation. This is Probable GTP-binding protein EngB from Lactococcus lactis subsp. lactis (strain IL1403) (Streptococcus lactis).